We begin with the raw amino-acid sequence, 815 residues long: Leucine--tRNA ligase (815 aa).

The 'HIGH' region signature appears at 42–52 (PYPSGRLHMGH). Positions 571 to 575 (KMSKS) match the 'KMSKS' region motif. Lys574 contributes to the ATP binding site.

Belongs to the class-I aminoacyl-tRNA synthetase family.

It is found in the cytoplasm. The catalysed reaction is tRNA(Leu) + L-leucine + ATP = L-leucyl-tRNA(Leu) + AMP + diphosphate. This Vesicomyosocius okutanii subsp. Calyptogena okutanii (strain HA) protein is Leucine--tRNA ligase.